The sequence spans 151 residues: Zinc finger HIT domain-containing protein 3 (151 aa).

Residues Cys-11, Cys-14, Cys-22, Cys-25, Cys-30, Cys-34, His-38, and Cys-42 each coordinate Zn(2+). An HIT-type zinc finger spans residues 11–42 (CVVCLEKPKYRCPTCRVPYCSVPCFQKHKEQC). Over residues 43-53 (SSEARPVEKRR) the composition is skewed to basic and acidic residues. The disordered stretch occupies residues 43–81 (SSEARPVEKRRAGPPVRSEESKDDDSSVADFLNSDEEED). Positions 63-81 (SKDDDSSVADFLNSDEEED) are enriched in acidic residues. Ser-76 is subject to Phosphoserine.

Thyroid receptor interacting proteins (TRIPs) specifically interact with the ligand binding domain of the thyroid receptor (TR). Requires the presence of thyroid hormone for its interaction. Interacts with NUFIP1. Interacts (via HIT-type zinc finger) with the RUVBL1/RUVBL2 complex in the presence of ADP. In terms of tissue distribution, expressed in the cerebellum.

Its subcellular location is the cytoplasm. It localises to the nucleus. The sequence is that of Zinc finger HIT domain-containing protein 3 (Znhit3) from Mus musculus (Mouse).